The chain runs to 530 residues: MEDDSLYLRGEWQFNHFSKLTSSRPDAAFAEIQRTSLPEKSPLSCETRVDLCDDLAPVARQLAPREKLPLSSRRPAAVGAGLQNMGNTCYVNASLQCLTYTPPLANYMLSREHSQTCHRHKGCMLCTMQAHITRALHNPGHVIQPSQALAAGFHRGKQEDAHEFLMFTVDAMKKACLPGHKQVDHHSKDTTLIHQIFGGYWRSQIKCLHCHGISDTFDPYLDIALDIQAAQSVQQALEQLAKPEELNGENAYHCGVCLQRAPASKTLTLHTSAKVLILVLKRFSDVTGNKIAKNVQYPECLDMQPYMSQPNTGPLVYVLYAVLVHAGWSCHNGHYFSYVKAQEGQWYKMDDAEVTASSITSVLSQQAYVLFYIQKSEWERHSESVSRGREPRALGAEDTDRRATQGELKRDHPCLQAPELDEHLVERATQESTLDHWKFLQEQNKTKPEFNVRKVEGTLPPDVLVIHQSKYKCGMKNHHPEQQSSLLNLSSSTPTHQESMNTGTLASLRGRARRSKGKNKHSKRALLVCQ.

The USP domain occupies 80–375 (AGLQNMGNTC…QAYVLFYIQK (296 aa)). Catalysis depends on Cys89, which acts as the Nucleophile. The active-site Proton acceptor is His334. 2 stretches are compositionally biased toward basic and acidic residues: residues 382-392 (SESVSRGREPR) and 398-412 (DTDR…KRDH). Disordered regions lie at residues 382–412 (SESV…KRDH) and 477–530 (NHHP…LVCQ). The segment covering 493–505 (TPTHQESMNTGTL) has biased composition (polar residues). A compositionally biased stretch (basic residues) spans 510-524 (GRARRSKGKNKHSKR).

It belongs to the peptidase C19 family. USP17 subfamily.

The protein localises to the nucleus. It localises to the endoplasmic reticulum. It catalyses the reaction Thiol-dependent hydrolysis of ester, thioester, amide, peptide and isopeptide bonds formed by the C-terminal Gly of ubiquitin (a 76-residue protein attached to proteins as an intracellular targeting signal).. Functionally, deubiquitinating enzyme that removes conjugated ubiquitin from specific proteins to regulate different cellular processes that may include cell proliferation, progression through the cell cycle, apoptosis, cell migration, and the cellular response to viral infection. In Homo sapiens (Human), this protein is Ubiquitin carboxyl-terminal hydrolase 17-like protein 5 (USP17L5).